Here is a 258-residue protein sequence, read N- to C-terminus: Thiazole synthase (258 aa).

The active-site Schiff-base intermediate with DXP is the lysine 100. 1-deoxy-D-xylulose 5-phosphate contacts are provided by residues glycine 161, 187 to 188 (AG), and 209 to 210 (NT).

It belongs to the ThiG family. As to quaternary structure, homotetramer. Forms heterodimers with either ThiH or ThiS.

It localises to the cytoplasm. It catalyses the reaction [ThiS sulfur-carrier protein]-C-terminal-Gly-aminoethanethioate + 2-iminoacetate + 1-deoxy-D-xylulose 5-phosphate = [ThiS sulfur-carrier protein]-C-terminal Gly-Gly + 2-[(2R,5Z)-2-carboxy-4-methylthiazol-5(2H)-ylidene]ethyl phosphate + 2 H2O + H(+). It functions in the pathway cofactor biosynthesis; thiamine diphosphate biosynthesis. Its function is as follows. Catalyzes the rearrangement of 1-deoxy-D-xylulose 5-phosphate (DXP) to produce the thiazole phosphate moiety of thiamine. Sulfur is provided by the thiocarboxylate moiety of the carrier protein ThiS. In vitro, sulfur can be provided by H(2)S. The chain is Thiazole synthase from Campylobacter jejuni subsp. jejuni serotype O:2 (strain ATCC 700819 / NCTC 11168).